The sequence spans 557 residues: Copine-6 (557 aa).

C2 domains lie at 2 to 127 and 134 to 263; these read SDPE…TKPL and TAGK…MQWD. 5 residues coordinate Ca(2+): D167, D173, D229, D231, and D237. A linker region region spans residues 244–303; the sequence is STFQEMQEGTANPGQEMQWDCINPKYRDKKKNYKSSGTVVLAQCTVEKVHTFLDYIMGGC. A VWFA domain is found at 306–526; that stretch reads SFTVAIDFTA…ALAKRVLAEV (221 aa).

The protein belongs to the copine family. Interacts (via second C2 domain) with OS9 (via C-terminus); this interaction occurs in a calcium-dependent manner in vitro. May interact with NECAB1. Requires Ca(2+) as cofactor.

The protein localises to the cytoplasm. It localises to the cell membrane. The protein resides in the endosome. It is found in the cytoplasmic vesicle. Its subcellular location is the clathrin-coated vesicle. The protein localises to the perikaryon. It localises to the cell projection. The protein resides in the dendrite. Its function is as follows. Calcium-dependent phospholipid-binding protein that plays a role in calcium-mediated intracellular processes. Binds phospholipid membranes in a calcium-dependent manner. Plays a role in dendrite formation by melanocytes. The protein is Copine-6 of Pongo abelii (Sumatran orangutan).